Here is a 500-residue protein sequence, read N- to C-terminus: Zinc finger protein PLAG1 (500 aa).

The segment at 1 to 30 (MATVIPGDLSEVRDTQKVPSGKRKRGETKP) is disordered. An interaction with KPNA2 region spans residues 2–84 (ATVIPGDLSE…SKYKLQRHMA (83 aa)). The Nuclear localization signal signature appears at 22–25 (KRKR). C2H2-type zinc fingers lie at residues 34–56 (FPCQ…SYSH), 62–86 (YKCI…MATH), 92–114 (HKCN…LHTH), 121–143 (FKCE…LALH), 150–172 (LTCK…LKSH), 185–207 (HQCE…MVVH), and 213–236 (FLCQ…KKSH). Residues 41-242 (KAFNSVEKLK…KKSHNQELLK (202 aa)) are decreased nuclear import with localization in the nucleus but also in the cytoplasm. The repression domain; contains 3 sumoylation motifs and massively decrease transcription activity stretch occupies residues 243–384 (VKTEPVDFLD…QASSSSKLGL (142 aa)). The tract at residues 243 to 500 (VKTEPVDFLD…TLPRFHQAFQ (258 aa)) is activates transcription; Inhibition of nuclear import due to lack of NLS and KPNA2 interaction. Glycyl lysine isopeptide (Lys-Gly) (interchain with G-Cter in SUMO) cross-links involve residues Lys244 and Lys263. Residues 365-388 (GGVPSSSQDSQASSSSKLGLDPQI) are disordered. Positions 369–380 (SSSQDSQASSSS) are enriched in low complexity. The tract at residues 385 to 500 (DPQIGSLDDG…TLPRFHQAFQ (116 aa)) is massively activates transcription.

The protein belongs to the krueppel C2H2-type zinc-finger protein family. Interacts with KPNA2, which escorts protein to the nucleus via interaction with nuclear localization signal. Interacts with E3 SUMO-protein ligase PIAS1, PIAS2 and PIAS4. In terms of processing, sumoylated with SUMO1; which inhibits transcriptional activity, but does not affect nuclear localization. Blockers of sumoylation pathway such as SENP3 and inactive UBE2I increases transcriptional capacity. Sumoylation is increased in the presence of PIAS1. Acetylated by lysine acetyltransferase EP300; which activates transcriptional capacity. Lysine residues that are sumoylated also seem to be target for acetylation. In terms of tissue distribution, expressed in fetal tissues such as lung, liver and kidney. Not detected or weak detection in normal adult tissues, but highly expressed in salivary gland with benign or malignant pleiomorphic adenomas with or without 8q12 aberrations, with preferential occurrence in benign tumors.

The protein localises to the nucleus. Its function is as follows. Transcription factor whose activation results in up-regulation of target genes, such as IGFII, leading to uncontrolled cell proliferation: when overexpressed in cultured cells, higher proliferation rate and transformation are observed. Other target genes such as CRLF1, CRABP2, CRIP2, PIGF are strongly induced in cells with PLAG1 induction. Proto-oncogene whose ectopic expression can trigger the development of pleomorphic adenomas of the salivary gland and lipoblastomas. Overexpression is associated with up-regulation of IGFII, is frequently observed in hepatoblastoma, common primary liver tumor in childhood. Cooperates with CBFB-MYH11, a fusion gene important for myeloid leukemia. This chain is Zinc finger protein PLAG1 (PLAG1), found in Homo sapiens (Human).